Here is an 83-residue protein sequence, read N- to C-terminus: UPF0512 protein I (83 aa).

The protein belongs to the UPF0512 family.

The polypeptide is UPF0512 protein I (Dictyostelium discoideum (Social amoeba)).